Reading from the N-terminus, the 72-residue chain is Translation initiation factor IF-1 (72 aa).

Positions 1–72 constitute an S1-like domain; it reads MAKEDVIEIE…TRGRITYRFK (72 aa).

It belongs to the IF-1 family. As to quaternary structure, component of the 30S ribosomal translation pre-initiation complex which assembles on the 30S ribosome in the order IF-2 and IF-3, IF-1 and N-formylmethionyl-tRNA(fMet); mRNA recruitment can occur at any time during PIC assembly.

It localises to the cytoplasm. Its function is as follows. One of the essential components for the initiation of protein synthesis. Stabilizes the binding of IF-2 and IF-3 on the 30S subunit to which N-formylmethionyl-tRNA(fMet) subsequently binds. Helps modulate mRNA selection, yielding the 30S pre-initiation complex (PIC). Upon addition of the 50S ribosomal subunit IF-1, IF-2 and IF-3 are released leaving the mature 70S translation initiation complex. The polypeptide is Translation initiation factor IF-1 (Streptococcus agalactiae serotype Ia (strain ATCC 27591 / A909 / CDC SS700)).